We begin with the raw amino-acid sequence, 34 residues long: Calcitonin-like peptide 2 (34 aa).

Cysteine 2 and cysteine 7 are oxidised to a cystine. Phenylalanine 34 carries the post-translational modification Phenylalanine amide.

In Odorrana schmackeri (Schmacker's frog), this protein is Calcitonin-like peptide 2.